We begin with the raw amino-acid sequence, 406 residues long: Probable mannan endo-1,4-beta-mannosidase C (406 aa).

The N-terminal stretch at 1-20 (MLINFEKVLSLALLAGSVSG) is a signal peptide. N-linked (GlcNAc...) asparagine glycosylation occurs at Asn58. Residue Trp80 coordinates substrate. Asn86 and Asn114 each carry an N-linked (GlcNAc...) asparagine glycan. Substrate is bound at residue Asn201. Catalysis depends on Glu202, which acts as the Proton donor. Tyr287 contributes to the substrate binding site. Glu320 functions as the Nucleophile in the catalytic mechanism. Asn338 is a glycosylation site (N-linked (GlcNAc...) asparagine). Trp362 lines the substrate pocket.

It belongs to the glycosyl hydrolase 5 (cellulase A) family.

It localises to the secreted. It catalyses the reaction Random hydrolysis of (1-&gt;4)-beta-D-mannosidic linkages in mannans, galactomannans and glucomannans.. In terms of biological role, endo-1,4-mannanase, a crucial enzyme for depolymerization of seed galactomannans and wood galactoglucomannans. The polypeptide is Probable mannan endo-1,4-beta-mannosidase C (manC) (Aspergillus terreus (strain NIH 2624 / FGSC A1156)).